The following is a 185-amino-acid chain: Auxin-responsive protein IAA34 (185 aa).

An EAR-like (transcriptional repression) motif is present at residues 63-67 (LGLSL). Residues 92-180 (WGYVKVTMDG…ERLRITRRND (89 aa)) form the PB1 domain.

Belongs to the Aux/IAA family. In terms of assembly, homodimers and heterodimers.

It is found in the nucleus. Its function is as follows. Aux/IAA proteins are short-lived transcriptional factors that function as repressors of early auxin response genes at low auxin concentrations. Repression is thought to result from the interaction with auxin response factors (ARFs), proteins that bind to the auxin-responsive promoter element (AuxRE). Formation of heterodimers with ARF proteins may alter their ability to modulate early auxin response genes expression. In Arabidopsis thaliana (Mouse-ear cress), this protein is Auxin-responsive protein IAA34 (IAA34).